The sequence spans 216 residues: LexA repressor (216 aa).

Positions 28 to 48 (RAEIAAEFGFSSPNAAEEHLR) form a DNA-binding region, H-T-H motif. Residues S134 and K171 each act as for autocatalytic cleavage activity in the active site.

Belongs to the peptidase S24 family. In terms of assembly, homodimer.

The catalysed reaction is Hydrolysis of Ala-|-Gly bond in repressor LexA.. Its function is as follows. Represses a number of genes involved in the response to DNA damage (SOS response), including recA and lexA. In the presence of single-stranded DNA, RecA interacts with LexA causing an autocatalytic cleavage which disrupts the DNA-binding part of LexA, leading to derepression of the SOS regulon and eventually DNA repair. In Ralstonia pickettii (strain 12J), this protein is LexA repressor.